The chain runs to 864 residues: Putative Gly-rich membrane protein Bcell_0380 (864 aa).

A helical membrane pass occupies residues 7-27; sequence ITFLAAFICIIFVIYAIYHSV. Positions 372-399 are disordered; that stretch reads TVENSFYDEDTTGQSDTGKGTPMSTADM. Residues 383–395 are compositionally biased toward polar residues; the sequence is TGQSDTGKGTPMS.

It localises to the cell membrane. The sequence is that of Putative Gly-rich membrane protein Bcell_0380 from Evansella cellulosilytica (strain ATCC 21833 / DSM 2522 / FERM P-1141 / JCM 9156 / N-4) (Bacillus cellulosilyticus).